A 463-amino-acid chain; its full sequence is Argininosuccinate lyase (463 aa).

It belongs to the lyase 1 family. Argininosuccinate lyase subfamily.

It is found in the cytoplasm. It catalyses the reaction 2-(N(omega)-L-arginino)succinate = fumarate + L-arginine. It functions in the pathway amino-acid biosynthesis; L-arginine biosynthesis; L-arginine from L-ornithine and carbamoyl phosphate: step 3/3. The protein is Argininosuccinate lyase of Streptococcus pneumoniae serotype 2 (strain D39 / NCTC 7466).